Here is a 460-residue protein sequence, read N- to C-terminus: Nucleosome assembly protein 1-like 2 (460 aa).

A compositionally biased stretch (basic and acidic residues) spans 1-11 (MAESVDHKELS). Disordered regions lie at residues 1 to 87 (MAES…DSDR) and 213 to 238 (DEEE…EDPK). The span at 213–223 (DEEEEEEEDDS) shows a compositional bias: acidic residues. Residues 346–352 (IKKKQRH) carry the Nuclear localization signal motif.

It belongs to the nucleosome assembly protein (NAP) family. As to expression, brain, specifically expressed in neurons.

It localises to the nucleus. Functionally, acidic protein which may be involved in interactions with other proteins or DNA. This chain is Nucleosome assembly protein 1-like 2 (Nap1l2), found in Mus musculus (Mouse).